A 216-amino-acid polypeptide reads, in one-letter code: Transmembrane emp24 domain-containing protein eca (216 aa).

Residues 1–20 form the signal peptide; sequence MRDQWICLALVLCALHSACG. Residues 21 to 183 lie on the Lumenal side of the membrane; the sequence is LYFHISETER…RHTSESTNSR (163 aa). A GOLD domain is found at 30 to 126; it reads RKCFIEEVPD…QLRVHLDIQV (97 aa). A coiled-coil region spans residues 134–164; that stretch reads ANVAQKEKLTELQLRIRQLLDQVEQITKEQN. The helical transmembrane segment at 184 to 203 threads the bilayer; that stretch reads VLWWSLAQTVVLVCMGFWQM. Residues 204 to 216 are Cytoplasmic-facing; the sequence is RHLKSFFEAKKLV. The Prevents secretion from ER signature appears at 213–216; sequence KKLV.

The protein belongs to the EMP24/GP25L family.

It localises to the endoplasmic reticulum membrane. In terms of biological role, eca and bai are essential, though not redundant, for dorsoventral patterning of the embryo. Specifically required during early embryogenesis for the activity of maternal tkv, while the zygotic tkv is not affected. In Drosophila mojavensis (Fruit fly), this protein is Transmembrane emp24 domain-containing protein eca.